Here is a 275-residue protein sequence, read N- to C-terminus: Phosphonoacetaldehyde hydrolase (275 aa).

Residue Asp-15 is the Nucleophile of the active site. Positions 15 and 17 each coordinate Mg(2+). Residue Lys-56 is the Schiff-base intermediate with substrate of the active site. A Mg(2+)-binding site is contributed by Asp-189.

This sequence belongs to the HAD-like hydrolase superfamily. PhnX family. In terms of assembly, homodimer. It depends on Mg(2+) as a cofactor.

The catalysed reaction is phosphonoacetaldehyde + H2O = acetaldehyde + phosphate + H(+). Inhibited by phosphite, moderately inhibited by phosphonic acids, the corresponding aminophosphonic acids activate the enzyme. Functionally, involved in phosphonate degradation. In Pseudomonas aeruginosa (strain ATCC 15692 / DSM 22644 / CIP 104116 / JCM 14847 / LMG 12228 / 1C / PRS 101 / PAO1), this protein is Phosphonoacetaldehyde hydrolase.